The chain runs to 575 residues: Inactive terpenoid synthase 20, chloroplastic (575 aa).

Residues 1–52 constitute a chloroplast transit peptide; it reads MEAITKNGSLSQTLVHCGPKSLSSFIPVRCLRFSKNPFPKKLVVTRARTSIN. Mg(2+) contacts are provided by Asp-332, Asp-336, Asp-474, Thr-478, and Glu-482. The DDXXD motif motif lies at 332 to 336; sequence DDLYD.

This sequence belongs to the terpene synthase family. Tpsa subfamily. As to expression, predominantly expressed in roots but also in leaves and stems.

It localises to the plastid. Its subcellular location is the chloroplast. In terms of biological role, does not possess diterpene synthase activity. In Arabidopsis thaliana (Mouse-ear cress), this protein is Inactive terpenoid synthase 20, chloroplastic.